The chain runs to 1178 residues: DNA-directed RNA polymerase subunit beta (1178 aa).

It belongs to the RNA polymerase beta chain family. In terms of assembly, the RNAP catalytic core consists of 2 alpha, 1 beta, 1 beta' and 1 omega subunit. When a sigma factor is associated with the core the holoenzyme is formed, which can initiate transcription.

It carries out the reaction RNA(n) + a ribonucleoside 5'-triphosphate = RNA(n+1) + diphosphate. Its function is as follows. DNA-dependent RNA polymerase catalyzes the transcription of DNA into RNA using the four ribonucleoside triphosphates as substrates. The chain is DNA-directed RNA polymerase subunit beta from Treponema pallidum (strain Nichols).